The chain runs to 399 residues: Developmentally-regulated G-protein 1 (399 aa).

The OBG-type G domain maps to glycine 63–glycine 288. GTP-binding positions include glycine 69–serine 76, aspartate 115–isoleucine 119, and asparagine 246–aspartate 249. The 79-residue stretch at glycine 288–lysine 366 folds into the TGS domain. Residues lysine 367–glutamine 399 form a disordered region. The segment covering isoleucine 388–glutamine 399 has biased composition (basic and acidic residues).

This sequence belongs to the TRAFAC class OBG-HflX-like GTPase superfamily. OBG GTPase family. Expressed in actively growing tissues and reproductive organs. Mostly expressed in leaves, stems and siliques. Also present in flowers and flower buds, and, to a lower extent, in roots.

Its subcellular location is the cytoplasmic vesicle. The protein localises to the cytoplasm. Its function is as follows. Binds GDP and GTP, and has low GTPase activity. May interact with phosphatidic acid (PA). The chain is Developmentally-regulated G-protein 1 (DRG1) from Arabidopsis thaliana (Mouse-ear cress).